Reading from the N-terminus, the 272-residue chain is Ethanolamine ammonia-lyase small subunit (272 aa).

Residues Val161, Glu182, and Cys211 each contribute to the adenosylcob(III)alamin site.

Belongs to the EutC family. In terms of assembly, the basic unit is a heterodimer which dimerizes to form tetramers. The heterotetramers trimerize; 6 large subunits form a core ring with 6 small subunits projecting outwards. Requires adenosylcob(III)alamin as cofactor.

The protein localises to the bacterial microcompartment. It carries out the reaction ethanolamine = acetaldehyde + NH4(+). Its pathway is amine and polyamine degradation; ethanolamine degradation. Functionally, catalyzes the deamination of various vicinal amino-alcohols to oxo compounds. Allows this organism to utilize ethanolamine as the sole source of nitrogen and carbon in the presence of external vitamin B12. The chain is Ethanolamine ammonia-lyase small subunit from Xanthomonas campestris pv. campestris (strain ATCC 33913 / DSM 3586 / NCPPB 528 / LMG 568 / P 25).